The chain runs to 1096 residues: Mediator of replication checkpoint protein 1 (1096 aa).

The segment covering 68–85 has biased composition (basic and acidic residues); that stretch reads EGKKAPEQNHNNGKDRSE. Positions 68 to 90 are disordered; that stretch reads EGKKAPEQNHNNGKDRSENSLPT. Serine 144 is subject to Phosphoserine. Disordered stretches follow at residues 166–200, 294–316, and 336–365; these read ALKTPLTTGRPGATQRIDSSGATSQTQPIKSIEPQ, IQSELASEDSKREKARNVEYKKP, and DDSSSNEDDDIKLENAHPKPVQNDDELHEN. The segment covering 181–200 has biased composition (polar residues); it reads RIDSSGATSQTQPIKSIEPQ. Positions 294-315 are enriched in basic and acidic residues; the sequence is IQSELASEDSKREKARNVEYKK. The segment covering 336 to 346 has biased composition (acidic residues); that stretch reads DDSSSNEDDDI. Residues serine 409, serine 411, and serine 434 each carry the phosphoserine modification. A coiled-coil region spans residues 488-542; it reads QKEVIETKGLKLEDMAKEKEIVENLLEQEILRNKRIRQKEKRREKLEENDFQLNA. Residues 527–620 are disordered; that stretch reads EKRREKLEEN…VEAKPKEKAD (94 aa). A compositionally biased stretch (low complexity) spans 547–560; that stretch reads SDSGSESSGFALSG. A compositionally biased stretch (basic residues) spans 591–600; that stretch reads KQKKSHHVKH. 2 positions are modified to phosphoserine: serine 605 and serine 607. Threonine 609 is modified (phosphothreonine). Positions 611-620 are enriched in basic and acidic residues; that stretch reads VEAKPKEKAD. Positions 652-716 form a coiled coil; that stretch reads DTQNIEEVMA…IKELKKRGVT (65 aa). The tract at residues 724–743 is disordered; the sequence is EESEDEWHGIGGADGEGSDD. Phosphoserine is present on residues serine 801 and serine 807. Residues 881-898 are compositionally biased toward polar residues; sequence DTQDNSINVGDNTGNNEQ. The interval 881-903 is disordered; sequence DTQDNSINVGDNTGNNEQKPVDQ. Serine 911 is modified (phosphoserine). Positions 1058 to 1096 are disordered; the sequence is RKTEGSHRYHHDHHNKKMKMKTKTKSNKLFESGQDSFDN. Residues 1065 to 1083 show a composition bias toward basic residues; that stretch reads RYHHDHHNKKMKMKTKTKS.

In terms of assembly, interacts with CDC45 in S phase. In terms of processing, phosphorylated by MEC1 and RAD53.

The protein resides in the nucleus. Functionally, required for normal DNA replication. Phosphorylated in response to DNA replication stress. Phosphorylation allows it to mediate the activation of RAD53. The polypeptide is Mediator of replication checkpoint protein 1 (MRC1) (Saccharomyces cerevisiae (strain ATCC 204508 / S288c) (Baker's yeast)).